Consider the following 353-residue polypeptide: Adenine deaminase (353 aa).

The Zn(2+) site is built by H19, H21, and H208. E211 (proton donor) is an active-site residue. D289 is a Zn(2+) binding site. D290 serves as a coordination point for substrate.

It belongs to the metallo-dependent hydrolases superfamily. Adenosine and AMP deaminases family. Adenine deaminase type 2 subfamily. It depends on Zn(2+) as a cofactor.

The protein resides in the cytoplasm. The protein localises to the nucleus. It catalyses the reaction adenine + H2O + H(+) = hypoxanthine + NH4(+). In terms of biological role, catalyzes the hydrolytic deamination of adenine to hypoxanthine. Plays an important role in the purine salvage pathway and in nitrogen catabolism. The sequence is that of Adenine deaminase from Gibberella zeae (strain ATCC MYA-4620 / CBS 123657 / FGSC 9075 / NRRL 31084 / PH-1) (Wheat head blight fungus).